The chain runs to 278 residues: Tryptophan synthase alpha chain (278 aa).

Residues glutamate 50 and aspartate 61 each act as proton acceptor in the active site.

This sequence belongs to the TrpA family. Tetramer of two alpha and two beta chains.

The enzyme catalyses (1S,2R)-1-C-(indol-3-yl)glycerol 3-phosphate + L-serine = D-glyceraldehyde 3-phosphate + L-tryptophan + H2O. Its pathway is amino-acid biosynthesis; L-tryptophan biosynthesis; L-tryptophan from chorismate: step 5/5. The alpha subunit is responsible for the aldol cleavage of indoleglycerol phosphate to indole and glyceraldehyde 3-phosphate. The chain is Tryptophan synthase alpha chain from Rhodopseudomonas palustris (strain TIE-1).